The primary structure comprises 196 residues: Phosphoheptose isomerase (196 aa).

An SIS domain is found at M36–E196. Residue N51 to G53 participates in substrate binding. 2 residues coordinate Zn(2+): H60 and E64. Residues E64, N93 to D94, S119 to S121, S124, and Q174 each bind substrate. 2 residues coordinate Zn(2+): Q174 and H182.

Belongs to the SIS family. GmhA subfamily. In terms of assembly, homotetramer. It depends on Zn(2+) as a cofactor.

The protein localises to the cytoplasm. It carries out the reaction 2 D-sedoheptulose 7-phosphate = D-glycero-alpha-D-manno-heptose 7-phosphate + D-glycero-beta-D-manno-heptose 7-phosphate. Its pathway is carbohydrate biosynthesis; D-glycero-D-manno-heptose 7-phosphate biosynthesis; D-glycero-alpha-D-manno-heptose 7-phosphate and D-glycero-beta-D-manno-heptose 7-phosphate from sedoheptulose 7-phosphate: step 1/1. Functionally, catalyzes the isomerization of sedoheptulose 7-phosphate in D-glycero-D-manno-heptose 7-phosphate. This chain is Phosphoheptose isomerase, found in Dechloromonas aromatica (strain RCB).